We begin with the raw amino-acid sequence, 336 residues long: Glucokinase (336 aa).

12 to 17 (ADIGGT) contacts ATP.

The protein belongs to the bacterial glucokinase family.

It localises to the cytoplasm. It catalyses the reaction D-glucose + ATP = D-glucose 6-phosphate + ADP + H(+). The sequence is that of Glucokinase from Helicobacter pylori (strain ATCC 700392 / 26695) (Campylobacter pylori).